A 284-amino-acid polypeptide reads, in one-letter code: Tropomyosin alpha-1 chain (284 aa).

N-acetylmethionine is present on Met1. A disordered region spans residues 1-38 (MDAIKKKMQMLKLDKENALDRAEQAEADKKAAEDRSKQ). Residues 1-284 (MDAIKKKMQM…DHALNDMTSI (284 aa)) are a coiled coil. The segment covering 12–38 (KLDKENALDRAEQAEADKKAAEDRSKQ) has biased composition (basic and acidic residues). A phosphoserine mark is found at Ala31, Ser45, and Lys51. A disordered region spans residues 116-136 (AEKAADESERGMKVIESRAQK). Phosphoserine is present on residues Ser174, Ser186, and Ser206. The residue at position 213 (Lys213) is an N6-acetyllysine. Ser252 bears the Phosphoserine mark. At Tyr261 the chain carries Phosphotyrosine. Ser271 carries the post-translational modification Phosphoserine. At Ser283 the chain carries Phosphoserine; by DAPK1.

Belongs to the tropomyosin family. As to quaternary structure, homodimer. Heterodimer of an alpha (TPM1, TPM3 or TPM4) and a beta (TPM2) chain. Interacts with HRG (via the HRR domain); the interaction contributes to the antiangiogenic properties of the histidine/proline-rich region (HRR) of HRG. Interacts (via N-terminus) with LMOD2 (via N-terminus) and TMOD1 (via N-terminus). In terms of processing, phosphorylated at Ser-283 by DAPK1 in response to oxidative stress and this phosphorylation enhances stress fiber formation in endothelial cells. Detected in primary breast cancer tissues but undetectable in normal breast tissues in Sudanese patients. Isoform 1 is expressed in adult and fetal skeletal muscle and cardiac tissues, with higher expression levels in the cardiac tissues. Isoform 10 is expressed in adult and fetal cardiac tissues, but not in skeletal muscle.

It is found in the cytoplasm. It localises to the cytoskeleton. Its function is as follows. Binds to actin filaments in muscle and non-muscle cells. Plays a central role, in association with the troponin complex, in the calcium dependent regulation of vertebrate striated muscle contraction. Smooth muscle contraction is regulated by interaction with caldesmon. In non-muscle cells is implicated in stabilizing cytoskeleton actin filaments. The chain is Tropomyosin alpha-1 chain (TPM1) from Homo sapiens (Human).